Reading from the N-terminus, the 592-residue chain is Bifunctional enzyme BirA/CoaX (592 aa).

The biotin--protein ligase stretch occupies residues 1–329 (MTVLKLSHWR…ISLRSDDRPV (329 aa)). One can recognise a BPL/LPL catalytic domain in the interval 83–259 (QTALKHECAS…ELDAVLLQYA (177 aa)). The interval 336 to 592 (DSERFLLLDG…AAEGREYEHI (257 aa)) is type III pantothenate kinase. ATP is bound at residue 344–351 (DGGNSRLK). Residues Tyr426 and 433-436 (GSDR) each bind substrate. The active-site Proton acceptor is the Asp435. Thr458 is a binding site for ATP. Residue Thr508 participates in substrate binding.

The protein in the N-terminal section; belongs to the biotin--protein ligase family. In the C-terminal section; belongs to the type III pantothenate kinase family. The cofactor is NH4(+). K(+) serves as cofactor.

It localises to the cytoplasm. It carries out the reaction biotin + L-lysyl-[protein] + ATP = N(6)-biotinyl-L-lysyl-[protein] + AMP + diphosphate + H(+). The catalysed reaction is (R)-pantothenate + ATP = (R)-4'-phosphopantothenate + ADP + H(+). Its pathway is cofactor biosynthesis; coenzyme A biosynthesis; CoA from (R)-pantothenate: step 1/5. Activates biotin to form biotinyl-5'-adenylate and transfers the biotin moiety to biotin-accepting proteins. Its function is as follows. Catalyzes the phosphorylation of pantothenate (Pan), the first step in CoA biosynthesis. This chain is Bifunctional enzyme BirA/CoaX (birA/coaX), found in Neisseria meningitidis serogroup B (strain ATCC BAA-335 / MC58).